The chain runs to 180 residues: MDLKGTTILAVKDDEGVSMAGDGQVTLGQAIVMKHGARKVRRIYKDRIIAGFAGSTADAFTLFERFEAKLEEFGGNLLRASVEMAKDWRKDKFLRRLEAMLLVSDGTTLLMLSGTGDVIEPDDGVAAIGSGGPYALAAARALQRHTALSAQEIVTKAMAIAGELCVFTNDHLTVENARRA.

The active site involves Thr6. Residues Gly162, Cys165, and Thr168 each contribute to the Na(+) site.

The protein belongs to the peptidase T1B family. HslV subfamily. A double ring-shaped homohexamer of HslV is capped on each side by a ring-shaped HslU homohexamer. The assembly of the HslU/HslV complex is dependent on binding of ATP.

The protein localises to the cytoplasm. The enzyme catalyses ATP-dependent cleavage of peptide bonds with broad specificity.. With respect to regulation, allosterically activated by HslU binding. Its function is as follows. Protease subunit of a proteasome-like degradation complex believed to be a general protein degrading machinery. This chain is ATP-dependent protease subunit HslV, found in Oleidesulfovibrio alaskensis (strain ATCC BAA-1058 / DSM 17464 / G20) (Desulfovibrio alaskensis).